Reading from the N-terminus, the 1075-residue chain is Atos homolog protein A (1075 aa).

The transactivation domain 1 (TAD1) stretch occupies residues 24-32 (ALLITEGRT). Disordered regions lie at residues 430–469 (FGSP…RQPA), 570–592 (YSPQ…PDSI), and 703–766 (LNKN…PHSV). Basic and acidic residues predominate over residues 440-454 (DSREGKVREKSETRP). Residues 703 to 712 (LNKNKTNCSS) are compositionally biased toward polar residues. Residues 746 to 759 (DRLKTEQEAKRDSG) are compositionally biased toward basic and acidic residues. The required for macropage invasion stretch occupies residues 878–935 (LLGNFEESVLNYRLDPLGIVDGFTAEVGASGTFCPTHLTLPVEVSFYSVSDDNAPSPY). A transactivation domain 2 (TAD2) region spans residues 962–970 (FNPNKTVVK).

This sequence belongs to the ATOS family.

It localises to the nucleus. In terms of biological role, transcription regulator that syncronizes transcriptional and translational programs to promote macrophage invasion of tissues. The protein is Atos homolog protein A (Atosa) of Mus musculus (Mouse).